Reading from the N-terminus, the 498-residue chain is MEIEKYTPEQIEELGKGARDFAFAHGVVFTELSVSKEGRNIATQIPITLFPSVIPHGAFVEAVSVQKAYNKLYAKIANDYEFLRLHLQSITKYDEFMNKLWNLYQKHREAVAHLKENQFQPLSLGVFRSDYMVHQDDSFIGCKQVEFNTISVSFGGVSKAVSNLHAYCSQSGLYRKPLTTNYLTVNTSVSGICTGISNAVDAYRDYVKNITSKMNIASDNTKPIVLFVVKGGERNITDQRTLEYELLNRFHVISKRIDIAELNSLIHDKSSNKLYMKTSFTTYEVAVVYYRVGYALDDYPSQEAWDMRLTIENTLAIKCPSISTHLAGSKKIQQVLAESNALERFLEGDELQAVRSTFADMYPLDDTPRGKEGIKLAFEKPEDFVLKPQREGGGNNTYGKDIPGLLSKMPQEEWDSYILMRYINAVPSQNYILKGERPEKFDVVDEIGILGTIVWNIKTDEVVQNGQSGFICRTKPKKTNEGGVATGYASLSSIELSE.

Position 128 (R128) interacts with substrate. E146 lines the ATP pocket. Positions 146 and 148 each coordinate Mg(2+). Substrate-binding positions include 150 to 153 (ISVS), 233 to 235 (ERN), Q239, and 291 to 294 (RVGY). Residue K330 coordinates ATP. S356 bears the Phosphoserine mark. Residues 387–396 (KPQREGGGNN), Y398, 420–423 (MRYI), and E446 each bind ATP. A Mg(2+)-binding site is contributed by E391. R473 provides a ligand contact to substrate. ATP-binding residues include K475 and E481. 484-485 (VA) contributes to the substrate binding site.

This sequence belongs to the eukaryotic GSH synthase family. As to quaternary structure, heterodimer composed of a large and a small chain. Mg(2+) serves as cofactor.

It carries out the reaction gamma-L-glutamyl-L-cysteine + glycine + ATP = glutathione + ADP + phosphate + H(+). It functions in the pathway sulfur metabolism; glutathione biosynthesis; glutathione from L-cysteine and L-glutamate: step 2/2. This chain is Glutathione synthetase large chain (gsa1), found in Schizosaccharomyces pombe (strain 972 / ATCC 24843) (Fission yeast).